Reading from the N-terminus, the 160-residue chain is Cytochrome b6-f complex subunit 4 (160 aa).

Transmembrane regions (helical) follow at residues 36–56 (LLYVFPIVIMGSFAAIVALAV), 95–115 (LLGVLAMASVPLGLILVPFIE), and 131–151 (TVFLFGTLVTLWLGIGAALPL).

This sequence belongs to the cytochrome b family. PetD subfamily. In terms of assembly, the 4 large subunits of the cytochrome b6-f complex are cytochrome b6, subunit IV (17 kDa polypeptide, PetD), cytochrome f and the Rieske protein, while the 4 small subunits are PetG, PetL, PetM and PetN. The complex functions as a dimer.

Its subcellular location is the cellular thylakoid membrane. Component of the cytochrome b6-f complex, which mediates electron transfer between photosystem II (PSII) and photosystem I (PSI), cyclic electron flow around PSI, and state transitions. This is Cytochrome b6-f complex subunit 4 from Desmonostoc sp. (strain PCC 7906) (Nostoc sp. (strain PCC 7906)).